The sequence spans 237 residues: Indole-3-glycerol phosphate synthase (237 aa).

It belongs to the TrpC family.

The catalysed reaction is 1-(2-carboxyphenylamino)-1-deoxy-D-ribulose 5-phosphate + H(+) = (1S,2R)-1-C-(indol-3-yl)glycerol 3-phosphate + CO2 + H2O. It functions in the pathway amino-acid biosynthesis; L-tryptophan biosynthesis; L-tryptophan from chorismate: step 4/5. The chain is Indole-3-glycerol phosphate synthase from Thermoplasma volcanium (strain ATCC 51530 / DSM 4299 / JCM 9571 / NBRC 15438 / GSS1).